A 274-amino-acid chain; its full sequence is MWPAPAKLNLFLHVIGRRADGYHLLQTVFRFIDRADTLRFEPRSDGEIVLATPIPGVPTDSDLTVRAARLLQQASACRQGATIHLDKQLPMGGGLGGGSSDAATVLLALNHLWQTGLTRPQLEKLGLTLGADVPVFVHGHNTFAEGIGEAFTDIELPPQSYLVLHPAIHVPTAAIFGAPELKRDTPPIRHGEWQPGQGHNDLEAVACAKFPAVAEYLNWLKQHAPQAMMTGSGACVFAGFASRREAEAILAQCPADMNAWIADGLGEHPLAKIS.

Lys-7 is a catalytic residue. Position 90–100 (90–100) interacts with ATP; that stretch reads PMGGGLGGGSS. Asp-132 is an active-site residue.

The protein belongs to the GHMP kinase family. IspE subfamily.

It carries out the reaction 4-CDP-2-C-methyl-D-erythritol + ATP = 4-CDP-2-C-methyl-D-erythritol 2-phosphate + ADP + H(+). It functions in the pathway isoprenoid biosynthesis; isopentenyl diphosphate biosynthesis via DXP pathway; isopentenyl diphosphate from 1-deoxy-D-xylulose 5-phosphate: step 3/6. Functionally, catalyzes the phosphorylation of the position 2 hydroxy group of 4-diphosphocytidyl-2C-methyl-D-erythritol. In Dechloromonas aromatica (strain RCB), this protein is 4-diphosphocytidyl-2-C-methyl-D-erythritol kinase.